Reading from the N-terminus, the 785-residue chain is uncharacterized protein (785 aa).

The DOD-type homing endonuclease domain maps to 293 to 421; it reads LVGYFLSEGY…LRLISLRLGF (129 aa).

This protein undergoes a protein self splicing that involves a post-translational excision of the intervening region (intein) followed by peptide ligation.

This is an uncharacterized protein from Methanocaldococcus jannaschii (strain ATCC 43067 / DSM 2661 / JAL-1 / JCM 10045 / NBRC 100440) (Methanococcus jannaschii).